A 245-amino-acid chain; its full sequence is 1-(5-phosphoribosyl)-5-[(5-phosphoribosylamino)methylideneamino] imidazole-4-carboxamide isomerase (245 aa).

Asp7 acts as the Proton acceptor in catalysis. The active-site Proton donor is the Asp129.

Belongs to the HisA/HisF family.

It localises to the cytoplasm. It carries out the reaction 1-(5-phospho-beta-D-ribosyl)-5-[(5-phospho-beta-D-ribosylamino)methylideneamino]imidazole-4-carboxamide = 5-[(5-phospho-1-deoxy-D-ribulos-1-ylimino)methylamino]-1-(5-phospho-beta-D-ribosyl)imidazole-4-carboxamide. Its pathway is amino-acid biosynthesis; L-histidine biosynthesis; L-histidine from 5-phospho-alpha-D-ribose 1-diphosphate: step 4/9. The protein is 1-(5-phosphoribosyl)-5-[(5-phosphoribosylamino)methylideneamino] imidazole-4-carboxamide isomerase of Shewanella putrefaciens (strain CN-32 / ATCC BAA-453).